The following is a 45-amino-acid chain: Movement protein P3a (45 aa).

Residues 9–29 (FALGFSSAIPFSVAGLYFVYL) form a helical membrane-spanning segment.

Belongs to the polerovirus movement protein P3a family. In terms of assembly, homodimer. Heterodimer with movement protein P17.

It localises to the host cell junction. The protein localises to the host plasmodesma. Its subcellular location is the host Golgi apparatus. The protein resides in the host chloroplast envelope. It is found in the host mitochondrion outer membrane. Its function is as follows. Together with movement protein P17, plays an essential role in virus long distance movement. The polypeptide is Movement protein P3a (ORF3a) (Solanum tuberosum (Potato)).